Here is a 493-residue protein sequence, read N- to C-terminus: Keratin, type II cuticular Hb3 (493 aa).

The segment at 1-111 is head; that stretch reads MTCGFSTVGS…PNAQCVKQEE (111 aa). Residues 111–422 form the IF rod domain; that stretch reads EKEQIKCLNN…RLLEGEEQRL (312 aa). The interval 112-146 is coil 1A; sequence KEQIKCLNNRFAAFIDKVRFLEQQNKLLETKLQFY. The segment at 147-156 is linker 1; that stretch reads QNRQCCESNL. Positions 157-257 are coil 1B; sequence EPLFEGYIET…YEEEIRVLQA (101 aa). K217 participates in a covalent cross-link: Glycyl lysine isopeptide (Lys-Gly) (interchain with G-Cter in SUMO1). The linker 12 stretch occupies residues 258 to 274; sequence NISDTSVIVKMDNSRGL. Residues 275-418 form a coil 2 region; sequence NMDNIVAEIK…ATYRRLLEGE (144 aa). Residues 419–493 form a tail region; it reads EQRLCEGVGA…GGGSCSLGRC (75 aa).

The protein belongs to the intermediate filament family. Heterotetramer of two type I and two type II keratins.

This chain is Keratin, type II cuticular Hb3, found in Bos taurus (Bovine).